We begin with the raw amino-acid sequence, 701 residues long: Pentatricopeptide repeat-containing protein At5g50390, chloroplastic (701 aa).

Residues 1–47 constitute a chloroplast transit peptide; the sequence is MEIPLSRYQSIRLDEIRDSSSNPKVLTFPRKFSLRGRRWKNPFGRLS. 12 PPR repeats span residues 86 to 116, 122 to 156, 157 to 187, 188 to 218, 223 to 257, 258 to 288, 289 to 323, 324 to 358, 359 to 389, 390 to 424, 425 to 460, and 461 to 491; these read SGVT…LEIR, GVST…GFEP, EQYM…IPER, NLYS…MWEE, ETHT…GVVD, NTFV…MPEK, TTVA…GVSI, DQFT…GFES, EIVA…LPRK, NIIS…NVAP, NHVT…GIKP, and RAMH…APLK. The tract at residues 496–571 is type E motif; the sequence is MWAALLNACR…MPACTWVEVG (76 aa). A type E(+) motif; degenerate region spans residues 572–606; that stretch reads DQTHSFLSGDRFDSYNETVKRQIYQKVDELMEEIS. A type DYW motif region spans residues 607 to 701; it reads EYGYSEEEQH…EGKCSCGGYW (95 aa).

Belongs to the PPR family. PCMP-H subfamily.

The protein localises to the plastid. The protein resides in the chloroplast. The chain is Pentatricopeptide repeat-containing protein At5g50390, chloroplastic (PCMP-H58) from Arabidopsis thaliana (Mouse-ear cress).